We begin with the raw amino-acid sequence, 559 residues long: Thermosome subunit alpha (559 aa).

Residues 536 to 552 are compositionally biased toward basic and acidic residues; the sequence is SGEKKGEKKEGGEEEKS. The disordered stretch occupies residues 536 to 559; it reads SGEKKGEKKEGGEEEKSSTPSSLE.

It belongs to the TCP-1 chaperonin family. In terms of assembly, forms a Heterooligomeric complex of two stacked nine-membered rings; one of alpha and the other of beta subunits.

Molecular chaperone; binds unfolded polypeptides in vitro, and has a weak ATPase activity. The polypeptide is Thermosome subunit alpha (thsA) (Sulfurisphaera tokodaii (strain DSM 16993 / JCM 10545 / NBRC 100140 / 7) (Sulfolobus tokodaii)).